The chain runs to 640 residues: UvrABC system protein C (640 aa).

The GIY-YIG domain occupies 22-101 (NDPGCYLMKD…IKSHQPYFNV (80 aa)). Residues 211–246 (DELRILLEKQMISFSESLKFEEAGSVRDQLKGIDRL) enclose the UVR domain.

This sequence belongs to the UvrC family. In terms of assembly, interacts with UvrB in an incision complex.

The protein resides in the cytoplasm. The UvrABC repair system catalyzes the recognition and processing of DNA lesions. UvrC both incises the 5' and 3' sides of the lesion. The N-terminal half is responsible for the 3' incision and the C-terminal half is responsible for the 5' incision. This is UvrABC system protein C from Prochlorococcus marinus (strain NATL2A).